The following is a 78-amino-acid chain: Putative capsid protein ORF9 (78 aa).

The signal sequence occupies residues methionine 1–alanine 29. A helical transmembrane segment spans residues valine 52–valine 72.

It belongs to the plectrovirus ORF9 family. As to quaternary structure, homomultimerizes.

It is found in the virion. It localises to the host membrane. In terms of biological role, may self assemble to form a helical capsid wrapping up the viral genomic DNA. The virion assembly and budding take place at the host inner membrane. The protein is Putative capsid protein ORF9 of Spiroplasma virus SpV1-C74 (SpV1).